Consider the following 179-residue polypeptide: MTRLEKIYTDKVAPALNKEFGYKSSMEIPGIKAISLNIGLGEASQNAKLIDGAVEELTAIAGQRAVVTRAKKSIAAFKLREGMPVGSRVTLRRDLMWDFLDKLISFALPRVRDFRGIPDKGFDGRGNFTLGIKELTIFPEIQLDKIEITKGMNVTIVTSAKTDKEGKMLLELLGMPFKK.

This sequence belongs to the universal ribosomal protein uL5 family. As to quaternary structure, part of the 50S ribosomal subunit; part of the 5S rRNA/L5/L18/L25 subcomplex. Contacts the 5S rRNA and the P site tRNA. Forms a bridge to the 30S subunit in the 70S ribosome.

In terms of biological role, this is one of the proteins that bind and probably mediate the attachment of the 5S RNA into the large ribosomal subunit, where it forms part of the central protuberance. In the 70S ribosome it contacts protein S13 of the 30S subunit (bridge B1b), connecting the 2 subunits; this bridge is implicated in subunit movement. Contacts the P site tRNA; the 5S rRNA and some of its associated proteins might help stabilize positioning of ribosome-bound tRNAs. In Maridesulfovibrio salexigens (strain ATCC 14822 / DSM 2638 / NCIMB 8403 / VKM B-1763) (Desulfovibrio salexigens), this protein is Large ribosomal subunit protein uL5.